We begin with the raw amino-acid sequence, 1010 residues long: Outer kinetochore KNL1 complex subunit knl-1 (1010 aa).

Tandem repeats lie at residues 85 to 88, 109 to 112, 228 to 231, 255 to 258, 278 to 281, 323 to 326, 346 to 349, 402 to 405, and 428 to 431. Residues 85–431 are 9 X 4 AA repeats of M-[D/E]-[I/L/M]-[S/T]; the sequence is MDISESPACT…LQKEDLMDIS (347 aa). Coiled-coil stretches lie at residues 820-915 and 956-988; these read RIVE…GLDK and KALR…KFAQ.

As to quaternary structure, component of the KNL1 complex composed of knl-1 and kbp-5. Part of the ten-subunit outer kinetochore KMN network that includes the KNL1, MIS12 and NDC80 complexes. Interacts with the protein phosphatase 1 (PP1) catalytic subunit gsp-1; the interaction is direct. Interacts with the protein phosphatase 1 (PP1) catalytic subunit gsp-2; the interaction is direct. Interacts with the MIS12 complex subunits kbp-1, kbp-2 and mis-12. Interacts with the NDC80 complex components ndc-80 and him-10. Interacts with knl-3. Interacts with kbp-3. Interacts with kbp-4. Interacts with kbp-5.

It is found in the cytoplasm. It localises to the cell cortex. The protein resides in the chromosome. The protein localises to the centromere. Its subcellular location is the kinetochore. Functionally, acts as a component of the outer kinetochore KNL1 complex that serves as a docking point for spindle assembly checkpoint components and mediates microtubule-kinetochore interactions. Kinetochores, consisting of a centromere-associated inner segment and a microtubule-contacting outer segment, play a crucial role in chromosome segregation by mediating the physical connection between centromeric DNA and spindle microtubules. The outer kinetochore is made up of the ten-subunit KMN network, comprising the MIS12, NDC80 and KNL1 complexes, and auxiliary microtubule-associated components; together they connect the outer kinetochore with the inner kinetochore, bind microtubules, and mediate interactions with mitotic checkpoint proteins that delay anaphase until chromosomes are bioriented on the spindle. Binds the protein phosphatase 1 catalytic subunits gsp-1 and gsp-2, which has a role in delaying formation of load-bearing kinetochore-microtubule attachments. Required for the recruitment of spindle-assembly checkpoint components bub-1 and mdf-1/2 to unattached kinetochores. Binds microtubules which plays a role in silencing of the spindle assembly checkpoint, but not the formation of load-bearing microtubule-kinetochore attachments. Has a role in the correct localization of the spindly-like protein spdl-1 and the RZZ complex that is composed of rod-1, czw-1 and zwl-1 to kinetochores. In Caenorhabditis elegans, this protein is Outer kinetochore KNL1 complex subunit knl-1 (knl-1).